Reading from the N-terminus, the 436-residue chain is Cytokine receptor-like factor 3 (436 aa).

Positions Leu-9–Lys-87 form a coiled coil. The Fibronectin type-III domain occupies Pro-177–Pro-270.

Belongs to the cytokine receptor-like factor 3 family.

It localises to the cytoplasm. Functionally, may play a role in the negative regulation of cell cycle progression. In Xenopus laevis (African clawed frog), this protein is Cytokine receptor-like factor 3 (crlf3).